The sequence spans 434 residues: Enolase (434 aa).

Substrate is bound by residues His-158 and Glu-167. Glu-210 serves as the catalytic Proton donor. Mg(2+)-binding residues include Asp-245, Glu-294, and Asp-319. 2 residues coordinate substrate: Glu-294 and Asp-319. Lys-344 functions as the Proton acceptor in the catalytic mechanism. Residues Ser-371 to Ser-374 and Lys-395 each bind substrate.

Belongs to the enolase family. In terms of assembly, homodimer. Requires Mg(2+) as cofactor.

Its subcellular location is the cytoplasm. The enzyme catalyses (2R)-2-phosphoglycerate = phosphoenolpyruvate + H2O. The protein operates within carbohydrate degradation; glycolysis; pyruvate from D-glyceraldehyde 3-phosphate: step 4/5. The sequence is that of Enolase from Caenorhabditis elegans.